The following is a 304-amino-acid chain: Putative S-adenosyl-L-methionine-dependent methyltransferase Mmcs_1043 (304 aa).

S-adenosyl-L-methionine is bound by residues Asp-130 and 159-160; that span reads DL.

It belongs to the UPF0677 family.

Functionally, exhibits S-adenosyl-L-methionine-dependent methyltransferase activity. In Mycobacterium sp. (strain MCS), this protein is Putative S-adenosyl-L-methionine-dependent methyltransferase Mmcs_1043.